An 82-amino-acid polypeptide reads, in one-letter code: RNA-binding protein Hfq (82 aa).

One can recognise a Sm domain in the interval Asp-9 to Val-68.

The protein belongs to the Hfq family. In terms of assembly, homohexamer.

RNA chaperone that binds small regulatory RNA (sRNAs) and mRNAs to facilitate mRNA translational regulation in response to envelope stress, environmental stress and changes in metabolite concentrations. Also binds with high specificity to tRNAs. This chain is RNA-binding protein Hfq, found in Pseudomonas aeruginosa.